The primary structure comprises 406 residues: Erythromycin esterase type I (406 aa).

This enzyme confers resistance to erythromycin through inactivation by hydrolyzing the lactone ring of the antibiotic. The polypeptide is Erythromycin esterase type I (ereA) (Escherichia coli).